Here is a 449-residue protein sequence, read N- to C-terminus: Protein translocase subunit SecD (449 aa).

A run of 6 helical transmembrane segments spans residues 6–26, 272–292, 294–314, 317–337, 379–399, and 401–421; these read GLVFLAILAAMILAFTIVLPT, LAVKAGLVGIILVMIFMIAFY, LPGLLASIALVFYGVIVLALF, VPVTLTLAGIGGFIVSAGMAV, TFIACGILFWVGGTIAAGAPV, and GFAVTLFLGVAVSMFTAIFVT.

The protein belongs to the SecD/SecF family. SecD subfamily. In terms of assembly, forms a complex with SecF. Part of the essential Sec protein translocation apparatus which comprises SecA, SecYEG and auxiliary proteins SecDF. Other proteins may also be involved.

It localises to the cell membrane. In terms of biological role, part of the Sec protein translocase complex. Interacts with the SecYEG preprotein conducting channel. SecDF uses the proton motive force (PMF) to complete protein translocation after the ATP-dependent function of SecA. This is Protein translocase subunit SecD from Dehalococcoides mccartyi (strain VS).